The sequence spans 241 residues: DNA repair protein RecO (241 aa).

It belongs to the RecO family.

Involved in DNA repair and RecF pathway recombination. The protein is DNA repair protein RecO of Xanthomonas campestris pv. campestris (strain B100).